A 238-amino-acid polypeptide reads, in one-letter code: ATP synthase subunit a (238 aa).

The next 5 membrane-spanning stretches (helical) occupy residues 15-35 (IFNL…FVFI), 76-96 (YSLF…LGLM), 111-131 (PTAN…LTHI), 167-187 (LALR…LLLL), and 208-230 (AFSV…VYLG).

It belongs to the ATPase A chain family. F-type ATPases have 2 components, CF(1) - the catalytic core - and CF(0) - the membrane proton channel. CF(1) has five subunits: alpha(3), beta(3), gamma(1), delta(1), epsilon(1). CF(0) has three main subunits: a(1), b(2) and c(9-12). The alpha and beta chains form an alternating ring which encloses part of the gamma chain. CF(1) is attached to CF(0) by a central stalk formed by the gamma and epsilon chains, while a peripheral stalk is formed by the delta and b chains.

It is found in the cell membrane. Key component of the proton channel; it plays a direct role in the translocation of protons across the membrane. The chain is ATP synthase subunit a from Streptococcus pneumoniae serotype 19F (strain G54).